Here is a 211-residue protein sequence, read N- to C-terminus: Protein-L-isoaspartate O-methyltransferase (211 aa).

Serine 62 is a catalytic residue.

The protein belongs to the methyltransferase superfamily. L-isoaspartyl/D-aspartyl protein methyltransferase family.

The protein resides in the cytoplasm. The catalysed reaction is [protein]-L-isoaspartate + S-adenosyl-L-methionine = [protein]-L-isoaspartate alpha-methyl ester + S-adenosyl-L-homocysteine. In terms of biological role, catalyzes the methyl esterification of L-isoaspartyl residues in peptides and proteins that result from spontaneous decomposition of normal L-aspartyl and L-asparaginyl residues. It plays a role in the repair and/or degradation of damaged proteins. The polypeptide is Protein-L-isoaspartate O-methyltransferase (Shewanella oneidensis (strain ATCC 700550 / JCM 31522 / CIP 106686 / LMG 19005 / NCIMB 14063 / MR-1)).